The chain runs to 743 residues: NAD(P)H-quinone oxidoreductase subunit 5, chloroplastic (743 aa).

16 helical membrane passes run 9 to 29 (WIIP…LLLF), 40 to 60 (WAFQ…NLSI), 89 to 109 (IDPL…LVLI), 125 to 145 (FAYM…SNLI), 147 to 167 (IYIF…FWFT), 185 to 205 (GDFG…SFEF), 219 to 239 (NEVN…GAIA), 258 to 278 (TPIS…FLVA), 283 to 303 (LFIV…ITVF), 327 to 347 (LGYM…FHLI), 354 to 374 (ALLF…VGYC), 396 to 416 (ISFL…CFWS), 425 to 445 (WLYS…TAFY), 548 to 568 (LFPI…GIPF), 607 to 627 (VFSV…YKPV), and 723 to 743 (YLFF…FFNL).

It belongs to the complex I subunit 5 family. As to quaternary structure, NDH is composed of at least 16 different subunits, 5 of which are encoded in the nucleus.

Its subcellular location is the plastid. It localises to the chloroplast thylakoid membrane. The catalysed reaction is a plastoquinone + NADH + (n+1) H(+)(in) = a plastoquinol + NAD(+) + n H(+)(out). The enzyme catalyses a plastoquinone + NADPH + (n+1) H(+)(in) = a plastoquinol + NADP(+) + n H(+)(out). Functionally, NDH shuttles electrons from NAD(P)H:plastoquinone, via FMN and iron-sulfur (Fe-S) centers, to quinones in the photosynthetic chain and possibly in a chloroplast respiratory chain. The immediate electron acceptor for the enzyme in this species is believed to be plastoquinone. Couples the redox reaction to proton translocation, and thus conserves the redox energy in a proton gradient. This Carthamus tinctorius (Safflower) protein is NAD(P)H-quinone oxidoreductase subunit 5, chloroplastic (ndhF).